The primary structure comprises 107 residues: U1-lycotoxin-Ls1b (107 aa).

A signal peptide spans 1 to 20; it reads MMKVLVVVALLVTLISYSSS. Positions 21–41 are excised as a propeptide; sequence EGIDDLEADELSSLMANEQTR. 4 disulfide bridges follow: Cys-44-Cys-59, Cys-51-Cys-68, Cys-58-Cys-86, and Cys-70-Cys-84.

This sequence belongs to the neurotoxin 19 (CSTX) family. 04 (U1-Lctx) subfamily. In terms of tissue distribution, expressed by the venom gland.

The protein localises to the secreted. The protein is U1-lycotoxin-Ls1b of Lycosa singoriensis (Wolf spider).